Consider the following 130-residue polypeptide: Large ribosomal subunit protein eL32 (130 aa).

The protein belongs to the eukaryotic ribosomal protein eL32 family. As to quaternary structure, part of the 50S ribosomal subunit.

The polypeptide is Large ribosomal subunit protein eL32 (Pyrococcus furiosus (strain ATCC 43587 / DSM 3638 / JCM 8422 / Vc1)).